The sequence spans 523 residues: Mogroside I-A1 synthase (523 aa).

H39 (proton acceptor) is an active-site residue. Residue D136 is the Charge relay of the active site. UDP-alpha-D-glucose-binding residues include S311, Q374, W392, N393, S394, E397, D413, and Q414.

It belongs to the UDP-glycosyltransferase family. As to expression, highly expressed in young fruits 15 and 34 days after anthesis (15-DAA and 34-DAA).

It catalyses the reaction mogrol + UDP-alpha-D-glucose = mogroside I-A1 + UDP + H(+). The catalysed reaction is mogroside I-A1 + UDP-alpha-D-glucose = mogroside IIE + UDP + H(+). It carries out the reaction mogroside IE + UDP-alpha-D-glucose = mogroside IIE + UDP + H(+). The enzyme catalyses mogroside II-A1 + UDP-alpha-D-glucose = mogroside IIIX + UDP + H(+). It catalyses the reaction mogroside II-A + UDP-alpha-D-glucose = mogroside III + UDP + H(+). The catalysed reaction is mogroside IIE + UDP-alpha-D-glucose = mogroside III-C3(1-&gt;6) + UDP + H(+). It carries out the reaction mogroside III + UDP-alpha-D-glucose = isomogroside IV + UDP + H(+). The enzyme catalyses mogroside III + UDP-alpha-D-glucose = mogroside IV + UDP + H(+). It catalyses the reaction mogroside IIIX + UDP-alpha-D-glucose = mogroside IVA + UDP + H(+). The catalysed reaction is siamenoside I + UDP-alpha-D-glucose = isomogroside V + UDP + H(+). The protein operates within secondary metabolite biosynthesis; terpenoid biosynthesis. In terms of biological role, UDP-glycosyltransferase involved in the biosynthesis of cucurbitacin and mogroside tetracyclic triterpene natural products (e.g. siamenoside I and mogrosides IV, V and VI). Cucurbitacins have cytotoxic properties and exhibit deterrent taste as a defense barrier against herbivores. Mogrosides are nonsugar highly oxygenated compounds used as high-intensity zero-calorie sweeteners; they also possess pharmacological properties such as regulating immunity, lowering blood sugar and lipid levels, protecting the liver, and acting as antioxidants and antitumor agents. Catalyzes the C24 primary glucosylation of mogrol and mogroside I-E1, and the C3 primary glucosylation of mogroside I-A1, mogroside II-A1 and mogroside II-A. Also supports branching glucosylations of mogroside II-E, mogroside III, mogroside IIIx and siamenoside I. This is Mogroside I-A1 synthase from Siraitia grosvenorii (Monk's fruit).